A 1482-amino-acid polypeptide reads, in one-letter code: Chromosome partition protein MukB (1482 aa).

Position 34–41 (34–41) interacts with ATP; that stretch reads GGNGAGKS. Coiled coils occupy residues 337-468, 509-604, 780-805, 835-1044, 1070-1115, and 1210-1265; these read LNLV…LSVA, QHLA…APIW, RAAR…ATLS, EAEI…ELVD, TNRA…TAKA, and EAIE…LQAV. A flexible hinge region spans residues 666–783; it reads PGGAEDQRLV…AVPLFGRAAR (118 aa).

The protein belongs to the SMC family. MukB subfamily. As to quaternary structure, homodimerization via its hinge domain. Binds to DNA via its C-terminal region. Interacts, and probably forms a ternary complex, with MukE and MukF via its C-terminal region. The complex formation is stimulated by calcium or magnesium. Interacts with tubulin-related protein FtsZ.

It localises to the cytoplasm. It is found in the nucleoid. Functionally, plays a central role in chromosome condensation, segregation and cell cycle progression. Functions as a homodimer, which is essential for chromosome partition. Involved in negative DNA supercoiling in vivo, and by this means organize and compact chromosomes. May achieve or facilitate chromosome segregation by condensation DNA from both sides of a centrally located replisome during cell division. In Serratia proteamaculans (strain 568), this protein is Chromosome partition protein MukB.